Reading from the N-terminus, the 441-residue chain is COBRA-like protein 2 (441 aa).

The N-terminal stretch at methionine 1 to alanine 28 is a signal peptide. N-linked (GlcNAc...) asparagine glycosylation is found at asparagine 37, asparagine 162, asparagine 170, asparagine 209, asparagine 234, asparagine 249, asparagine 314, asparagine 329, and asparagine 348. Asparagine 417 carries GPI-anchor amidated asparagine lipidation. A propeptide spans alanine 418–methionine 441 (removed in mature form).

The protein belongs to the COBRA family. Expressed in roots, stems, leaves, flowers and siliques.

The protein localises to the cell membrane. This chain is COBRA-like protein 2 (COBL2), found in Arabidopsis thaliana (Mouse-ear cress).